The following is a 197-amino-acid chain: MNISELIHDFVLALVELGILLGSLGAVLLVNTVNSAFSLGLVFTCISLLYFVLNADFVAAAQLLVYVGAINVLTVFAVMITDEPAGSETTARGIGYIITAGTCTILFSILSFVIHNTKWSDLSLIPQSGISTSGTLGSNVQQLGYKLLGEFVIPFELLSILLLAALVGAINLARNEDAFIVNKKSAASAPYKNSTFF.

Helical transmembrane passes span 10–30 (FVLA…VLLV), 39–59 (LGLV…DFVA), 60–80 (AAQL…AVMI), 94–114 (IGYI…SFVI), and 147–167 (LLGE…AALV).

The protein belongs to the complex I subunit 6 family. NDH is composed of at least 16 different subunits, 5 of which are encoded in the nucleus.

It localises to the plastid. The protein localises to the chloroplast thylakoid membrane. The enzyme catalyses a plastoquinone + NADH + (n+1) H(+)(in) = a plastoquinol + NAD(+) + n H(+)(out). It carries out the reaction a plastoquinone + NADPH + (n+1) H(+)(in) = a plastoquinol + NADP(+) + n H(+)(out). Its function is as follows. NDH shuttles electrons from NAD(P)H:plastoquinone, via FMN and iron-sulfur (Fe-S) centers, to quinones in the photosynthetic chain and possibly in a chloroplast respiratory chain. The immediate electron acceptor for the enzyme in this species is believed to be plastoquinone. Couples the redox reaction to proton translocation, and thus conserves the redox energy in a proton gradient. The protein is NAD(P)H-quinone oxidoreductase subunit 6, chloroplastic (ndhG) of Adiantum capillus-veneris (Maidenhair fern).